The sequence spans 226 residues: Cytidylate kinase (226 aa).

Residue 11-19 (GPAGAGKST) coordinates ATP.

The protein belongs to the cytidylate kinase family. Type 1 subfamily.

The protein resides in the cytoplasm. The enzyme catalyses CMP + ATP = CDP + ADP. It catalyses the reaction dCMP + ATP = dCDP + ADP. In Pelotomaculum thermopropionicum (strain DSM 13744 / JCM 10971 / SI), this protein is Cytidylate kinase.